A 660-amino-acid chain; its full sequence is Macrolide export ATP-binding/permease protein MacB (660 aa).

Positions 10–248 constitute an ABC transporter domain; that stretch reads LVLENIVRKF…AKGQALQGKQ (239 aa). Position 46–53 (46–53) interacts with ATP; that stretch reads GASGSGKS. A run of 4 helical transmembrane segments spans residues 285–305, 532–552, 593–613, and 625–645; these read FLTM…VALG, ILTL…GIGV, IIGG…FVLF, and SIII…FSPA.

This sequence belongs to the ABC transporter superfamily. Macrolide exporter (TC 3.A.1.122) family. Homodimer.

The protein localises to the cell inner membrane. Its function is as follows. Non-canonical ABC transporter that contains transmembrane domains (TMD), which form a pore in the inner membrane, and an ATP-binding domain (NBD), which is responsible for energy generation. Confers resistance against macrolides. This is Macrolide export ATP-binding/permease protein MacB from Bartonella quintana (strain Toulouse) (Rochalimaea quintana).